The following is a 448-amino-acid chain: tRNA wybutosine-synthesizing protein 2 homolog (448 aa).

S-adenosyl-L-methionine contacts are provided by residues Ser-218, Lys-225, Glu-265, and Asp-293–Asn-294.

Belongs to the class I-like SAM-binding methyltransferase superfamily. TRM5/TYW2 family.

The catalysed reaction is 4-demethylwyosine(37) in tRNA(Phe) + S-adenosyl-L-methionine = 4-demethyl-7-[(3S)-3-amino-3-carboxypropyl]wyosine(37) in tRNA(Phe) + S-methyl-5'-thioadenosine + H(+). It participates in tRNA modification; wybutosine-tRNA(Phe) biosynthesis. Its function is as follows. S-adenosyl-L-methionine-dependent transferase that acts as a component of the wybutosine biosynthesis pathway. Wybutosine is a hyper modified guanosine with a tricyclic base found at the 3'-position adjacent to the anticodon of eukaryotic phenylalanine tRNA. Catalyzes the transfer of the alpha-amino-alpha-carboxypropyl (acp) group from S-adenosyl-L-methionine to the C-7 position of 4-demethylwyosine (imG-14) to produce wybutosine-86. This is tRNA wybutosine-synthesizing protein 2 homolog (TRMT12) from Macaca fascicularis (Crab-eating macaque).